A 223-amino-acid chain; its full sequence is Ubiquitin-conjugating enzyme E2 S (223 aa).

An N-acetylmethionine modification is found at Met1. A UBC core domain is found at 11–157 (HIIRLVYKEV…ARLLTEIHGG (147 aa)). Cys95 (glycyl thioester intermediate) is an active-site residue. Residues 155 to 223 (HGGAGGPSGG…TDKKRALRRL (69 aa)) are disordered. Residues 169–195 (GRATASGAAASTADPTAPGGPAGAEGP) show a composition bias toward low complexity. Ser174 carries the post-translational modification Phosphoserine. Over residues 209–223 (AAKKKTDKKRALRRL) the composition is skewed to basic residues.

It belongs to the ubiquitin-conjugating enzyme family. As to quaternary structure, component of the APC/C complex, composed of at least 14 distinct subunits that assemble into a complex of at least 19 chains with a combined molecular mass of around 1.2 MDa. Within this complex, directly interacts with ANAPC2 and ANAPC4. Interacts with CDC20, FZR1/CDH1 and VHL. Post-translationally, autoubiquitinated by the APC/C complex during G1, leading to its degradation by the proteasome.

It carries out the reaction S-ubiquitinyl-[E1 ubiquitin-activating enzyme]-L-cysteine + [E2 ubiquitin-conjugating enzyme]-L-cysteine = [E1 ubiquitin-activating enzyme]-L-cysteine + S-ubiquitinyl-[E2 ubiquitin-conjugating enzyme]-L-cysteine.. The protein operates within protein modification; protein ubiquitination. Its function is as follows. Accepts ubiquitin from the E1 complex and catalyzes its covalent attachment to other proteins. Catalyzes 'Lys-11'-linked polyubiquitination. Acts as an essential factor of the anaphase promoting complex/cyclosome (APC/C), a cell cycle-regulated ubiquitin ligase that controls progression through mitosis. Acts by specifically elongating 'Lys-11'-linked polyubiquitin chains initiated by the E2 enzyme UBE2C/UBCH10 on APC/C substrates, enhancing the degradation of APC/C substrates by the proteasome and promoting mitotic exit. Also acts by elongating ubiquitin chains initiated by the E2 enzyme UBE2D1/UBCH5 in vitro; it is however unclear whether UBE2D1/UBCH5 acts as an E2 enzyme for the APC/C in vivo. Also involved in ubiquitination and subsequent degradation of VHL, resulting in an accumulation of HIF1A. In vitro able to promote polyubiquitination using all 7 ubiquitin Lys residues, except 'Lys-48'-linked polyubiquitination. The sequence is that of Ubiquitin-conjugating enzyme E2 S (UBE2S) from Bos taurus (Bovine).